We begin with the raw amino-acid sequence, 179 residues long: Lipoprotein signal peptidase (179 aa).

4 helical membrane passes run L10–I30, V48–F68, W75–L95, and N101–I121. Catalysis depends on residues D131 and D149. A helical transmembrane segment spans residues H141–I161.

The protein belongs to the peptidase A8 family.

The protein localises to the cell inner membrane. The catalysed reaction is Release of signal peptides from bacterial membrane prolipoproteins. Hydrolyzes -Xaa-Yaa-Zaa-|-(S,diacylglyceryl)Cys-, in which Xaa is hydrophobic (preferably Leu), and Yaa (Ala or Ser) and Zaa (Gly or Ala) have small, neutral side chains.. The protein operates within protein modification; lipoprotein biosynthesis (signal peptide cleavage). In terms of biological role, this protein specifically catalyzes the removal of signal peptides from prolipoproteins. In Acinetobacter baylyi (strain ATCC 33305 / BD413 / ADP1), this protein is Lipoprotein signal peptidase.